The following is a 407-amino-acid chain: Spore germination protein KC (407 aa).

The signal sequence occupies residues 1 to 20; the sequence is MVRKCLLAVLMLLSVIVLPG. Residue Cys-21 is the site of N-palmitoyl cysteine attachment. Cys-21 is lipidated: S-diacylglycerol cysteine.

The protein belongs to the GerABKC lipoprotein family.

The protein resides in the cell membrane. In terms of biological role, involved in the germination response to the combination of glucose, fructose, L-asparagine, and KCl. In Bacillus subtilis (strain 168), this protein is Spore germination protein KC (gerKC).